A 310-amino-acid chain; its full sequence is Putative S-adenosyl-L-methionine-dependent methyltransferase Franean1_4929 (310 aa).

The tract at residues 1 to 28 (MSRPSAPRGRTELRSIHERGHERGSAGV) is disordered. Positions 9–24 (GRTELRSIHERGHERG) are enriched in basic and acidic residues. S-adenosyl-L-methionine is bound by residues Asp-136 and 165–166 (DL).

It belongs to the UPF0677 family.

Exhibits S-adenosyl-L-methionine-dependent methyltransferase activity. The protein is Putative S-adenosyl-L-methionine-dependent methyltransferase Franean1_4929 of Parafrankia sp. (strain EAN1pec).